Consider the following 484-residue polypeptide: Malonate-semialdehyde dehydrogenase 3 (484 aa).

Positions 152, 176, 179, 180, and 229 each coordinate NAD(+). Cys284 serves as the catalytic Nucleophile. Glu384 lines the NAD(+) pocket.

The protein belongs to the aldehyde dehydrogenase family. IolA subfamily. As to quaternary structure, homotetramer.

The enzyme catalyses 3-oxopropanoate + NAD(+) + CoA + H2O = hydrogencarbonate + acetyl-CoA + NADH + H(+). It carries out the reaction 2-methyl-3-oxopropanoate + NAD(+) + CoA + H2O = propanoyl-CoA + hydrogencarbonate + NADH + H(+). It functions in the pathway polyol metabolism; myo-inositol degradation into acetyl-CoA; acetyl-CoA from myo-inositol: step 7/7. Functionally, catalyzes the oxidation of malonate semialdehyde (MSA) and methylmalonate semialdehyde (MMSA) into acetyl-CoA and propanoyl-CoA, respectively. Is involved in a myo-inositol catabolic pathway. Bicarbonate, and not CO2, is the end-product of the enzymatic reaction. The protein is Malonate-semialdehyde dehydrogenase 3 of Geobacillus kaustophilus (strain HTA426).